Consider the following 60-residue polypeptide: Cytotoxin sagitoxin (60 aa).

Cystine bridges form between Cys3–Cys21, Cys14–Cys38, Cys42–Cys53, and Cys54–Cys59.

This sequence belongs to the three-finger toxin family. Short-chain subfamily. Type IA cytotoxin sub-subfamily. In terms of assembly, monomer in solution; Homodimer and oligomer (homohexamer) in the presence of negatively charged lipids forming a pore with a size ranging between 20 and 30 Angstroms. Expressed by the venom gland.

The protein localises to the secreted. It localises to the target cell membrane. Functionally, shows cytolytic activity on many different cells by forming pore in lipid membranes. In vivo, increases heart rate or kill the animal by cardiac arrest. In addition, it binds to heparin with high affinity, interacts with Kv channel-interacting protein 1 (KCNIP1) in a calcium-independent manner, and binds to integrin alpha-V/beta-3 (ITGAV/ITGB3) with moderate affinity. This chain is Cytotoxin sagitoxin, found in Naja sagittifera (Andaman cobra).